Reading from the N-terminus, the 766-residue chain is Slit homolog 2 protein (766 aa).

The N-terminal stretch at 1–30 (MSGIGWQTLSLSLALVLSILNKVAPHACPA) is a signal peptide. One can recognise an LRRNT domain in the interval 31-55 (QCSCSGSTVDCHGLALRIVPRNIPR). LRR repeat units follow at residues 56 to 77 (NTERLDLNGNNITRITKTDFAG), 80 to 101 (HLRILQLMENKISTIERGAFHD), 104 to 125 (ELERLRLNRNNLQLFPELLFLG), 128 to 149 (KLYRLDLSENQIQAIPRKAFRG), 152 to 173 (DIKNLQLDYNQISCIEDGAFRA), and 176 to 197 (DLEVLTLNNNNITRLSVASFNH). A glycan (N-linked (GlcNAc...) asparagine) is linked at Asn-66. A glycan (N-linked (GlcNAc...) asparagine) is linked at Asn-186. Residues 209–259 (NNLYCDCHLAWLSDWLRQRPRVGLYTQCMGPSHLRGHNVAEVQKREFVCSD) enclose the LRRCT 1 domain. Residues 268–304 (MAPSCSVLHCPIACTCSNNIVDCRGKGLTEIPTNLPE) form the LRRNT 2 domain. Cysteines 281 and 290 form a disulfide. LRR repeat units lie at residues 305–326 (TITEIRLEQNSIRVIPPGAFSP), 329–350 (KLRRLDLSNNQISELAPDAFQG), 353–374 (SLNSLVLYGNKITELPKSLFEG), 377–398 (SLQLLLLNANKINCLRVDAFQD), and 401–422 (NLNLLSLYDNKLQTVAKGTFSA). One can recognise an LRRCT 2 domain in the interval 434-484 (NPFICDCHLKWLADYLHTNPIETSGARCTSPRRLANKRIGQIKSKKFRCSG). Intrachain disulfides connect Cys-438–Cys-461, Cys-440–Cys-482, Cys-502–Cys-508, and Cys-506–Cys-515. The region spanning 493 to 529 (SGDCFADLACPEKCRCEGTTVDCSNQKLNKIPDHIPQ) is the LRRNT 3 domain. LRR repeat units lie at residues 530–551 (YTAELRLNNNEFTVLEATGIFK), 555–576 (QLRKINLSNNKITDIEEGAFEG), 579–600 (GVNEILLTSNRLENVQHKMFKG), 603–624 (SLKTLMLRSNRISCVGNDSFTG), and 627–648 (SVRLLSLYDNQITTVAPGAFGT). Asn-560 is a glycosylation site (N-linked (GlcNAc...) asparagine). An N-linked (GlcNAc...) asparagine glycan is attached at Asn-619. The region spanning 660-710 (NPFNCNCHLAWLGEWLRRKRIVTGNPRCQKPYFLKEIPIQDVAIQDFTCDD) is the LRRCT 3 domain. Disulfide bonds link Cys-664–Cys-687, Cys-666–Cys-708, Cys-723–Cys-729, and Cys-727–Cys-736. Positions 714–750 (DNSCSPLSRCPSECTCLDTVVRCSNKGLKVLPKGIPR) constitute an LRRNT 4 domain.

Homodimer. Binds ROBO1 and ROBO2 with high affinity. Interacts with GREM1.

It is found in the secreted. Thought to act as molecular guidance cue in cellular migration, and function appears to be mediated by interaction with roundabout homolog receptors. During neural development involved in axonal navigation at the ventral midline of the neural tube and projection of axons to different regions. SLIT1 and SLIT2 seem to be essential for midline guidance in the forebrain by acting as repulsive signal preventing inappropriate midline crossing by axons projecting from the olfactory bulb. In spinal cord development may play a role in guiding commissural axons once they reached the floor plate by modulating the response to netrin. In vitro, silences the attractive effect of NTN1 but not its growth-stimulatory effect and silencing requires the formation of a ROBO1-DCC complex. May be implicated in spinal cord midline post-crossing axon repulsion. In vitro, only commissural axons that crossed the midline responded to SLIT2. In the developing visual system appears to function as repellent for retinal ganglion axons by providing a repulsion that directs these axons along their appropriate paths prior to, and after passage through, the optic chiasm. In vitro, collapses and repels retinal ganglion cell growth cones. Seems to play a role in branching and arborization of CNS sensory axons, and in neuronal cell migration. Seems to be involved in regulating leukocyte migration. This is Slit homolog 2 protein (Slit2) from Rattus norvegicus (Rat).